The following is a 506-amino-acid chain: Maturase K (506 aa).

It belongs to the intron maturase 2 family. MatK subfamily.

The protein localises to the plastid. It is found in the chloroplast. In terms of biological role, usually encoded in the trnK tRNA gene intron. Probably assists in splicing its own and other chloroplast group II introns. The chain is Maturase K from Prunus dulcis (Almond).